The chain runs to 233 residues: Large ribosomal subunit protein uL1 (233 aa).

The protein belongs to the universal ribosomal protein uL1 family. As to quaternary structure, part of the 50S ribosomal subunit.

In terms of biological role, binds directly to 23S rRNA. The L1 stalk is quite mobile in the ribosome, and is involved in E site tRNA release. Protein L1 is also a translational repressor protein, it controls the translation of the L11 operon by binding to its mRNA. The sequence is that of Large ribosomal subunit protein uL1 from Shewanella sp. (strain ANA-3).